A 400-amino-acid polypeptide reads, in one-letter code: Imidazolonepropionase (400 aa).

Fe(3+) contacts are provided by histidine 70 and histidine 72. Zn(2+) contacts are provided by histidine 70 and histidine 72. 4-imidazolone-5-propanoate contacts are provided by arginine 79, tyrosine 142, and histidine 175. Tyrosine 142 contributes to the N-formimidoyl-L-glutamate binding site. Fe(3+) is bound at residue histidine 239. Histidine 239 contacts Zn(2+). Glutamine 242 lines the 4-imidazolone-5-propanoate pocket. Fe(3+) is bound at residue aspartate 314. Aspartate 314 lines the Zn(2+) pocket. N-formimidoyl-L-glutamate is bound by residues asparagine 316 and glycine 318. 4-imidazolone-5-propanoate is bound at residue threonine 319.

This sequence belongs to the metallo-dependent hydrolases superfamily. HutI family. Requires Zn(2+) as cofactor. Fe(3+) serves as cofactor.

It localises to the cytoplasm. The catalysed reaction is 4-imidazolone-5-propanoate + H2O = N-formimidoyl-L-glutamate. Its pathway is amino-acid degradation; L-histidine degradation into L-glutamate; N-formimidoyl-L-glutamate from L-histidine: step 3/3. Functionally, catalyzes the hydrolytic cleavage of the carbon-nitrogen bond in imidazolone-5-propanoate to yield N-formimidoyl-L-glutamate. It is the third step in the universal histidine degradation pathway. The protein is Imidazolonepropionase of Methylobacterium sp. (strain 4-46).